The following is a 56-amino-acid chain: Stable protein 1 (56 aa).

The 44-residue stretch at 1–44 (GYTHAFESTFESKSGLQEYLDSAALAAFAEGFLPTLSQRSFNWG) folds into the Stress-response A/B barrel domain.

In Populus euphratica (Euphrates poplar), this protein is Stable protein 1.